The primary structure comprises 296 residues: D-alanine--D-alanine ligase (296 aa).

An ATP-grasp domain is found at 99–292; that stretch reads TYRVLDGYVN…FEELVDAIIQ (194 aa). 125-176 serves as a coordination point for ATP; sequence GFPCVIKPRKEGSSIGVHICDNSNQLYNDLSEELKKYNEMMIQRYIEGRELT. Aspartate 247, glutamate 259, and asparagine 261 together coordinate Mg(2+).

This sequence belongs to the D-alanine--D-alanine ligase family. Mg(2+) is required as a cofactor. Mn(2+) serves as cofactor.

It localises to the cytoplasm. It catalyses the reaction 2 D-alanine + ATP = D-alanyl-D-alanine + ADP + phosphate + H(+). It participates in cell wall biogenesis; peptidoglycan biosynthesis. In terms of biological role, cell wall formation. This chain is D-alanine--D-alanine ligase, found in Pseudothermotoga lettingae (strain ATCC BAA-301 / DSM 14385 / NBRC 107922 / TMO) (Thermotoga lettingae).